The primary structure comprises 107 residues: N(4)-acetylcytidine amidohydrolase (107 aa).

Residues 9 to 105 (TFFEFLTPLI…KLFVIEYELI (97 aa)) enclose the ASCH domain. K23 serves as the catalytic Proton acceptor. T26 acts as the Nucleophile in catalysis. The active-site Proton donor is the E76.

It belongs to the N(4)-acetylcytidine amidohydrolase family.

It carries out the reaction N(4)-acetylcytidine + H2O = cytidine + acetate + H(+). It catalyses the reaction N(4)-acetyl-2'-deoxycytidine + H2O = 2'-deoxycytidine + acetate + H(+). The enzyme catalyses N(4)-acetylcytosine + H2O = cytosine + acetate + H(+). In terms of biological role, catalyzes the hydrolysis of N(4)-acetylcytidine (ac4C). In Vibrio parahaemolyticus serotype O3:K6 (strain RIMD 2210633), this protein is N(4)-acetylcytidine amidohydrolase.